The sequence spans 90 residues: Evasin P1126 (90 aa).

The first 25 residues, 1–25, serve as a signal peptide directing secretion; the sequence is MTSHSAVRIAIFAVIALHSIFECLS. 3 cysteine pairs are disulfide-bonded: Cys-46-Cys-62, Cys-50-Cys-64, and Cys-58-Cys-75. An N-linked (GlcNAc...) asparagine glycan is attached at Asn-55. A glycan (N-linked (GlcNAc...) asparagine) is linked at Asn-77.

The protein resides in the secreted. Salivary chemokine-binding protein which binds to host chemokines CXCL1, CXCL2, CXCL3, CXCL4, CXCL5, CXCL6, CXCL7, CXCL10 and CXCL11. This Amblyomma cajennense (Cayenne tick) protein is Evasin P1126.